The sequence spans 1780 residues: Chitin synthase Vb (1780 aa).

Residues Asn133, Asn153, Asn629, Asn644, Asn655, and Asn660 are each glycosylated (N-linked (GlcNAc...) asparagine). The next 2 helical transmembrane spans lie at 740-760 (AWIAFVWALTFWIPSPLLKFI) and 776-796 (FVLFFLIILINGMVVFWIIGF). The 62-residue stretch at 805–866 (NKAWNVKEVA…LSGMVMDNYF (62 aa)) folds into the Cytochrome b5 heme-binding domain. 2 N-linked (GlcNAc...) asparagine glycosylation sites follow: Asn888 and Asn1009. The helical transmembrane segment at 1046–1066 (LLLAFAIIICIVTAVKFLAAL) threads the bilayer. A glycan (N-linked (GlcNAc...) asparagine) is linked at Asn1411. The next 3 membrane-spanning stretches (helical) occupy residues 1442-1462 (LCGTIILPSTCVYIGYLIYIL), 1469-1489 (IPYISLAMIGAVYGLQALIFI), and 1497-1517 (IGWMIIYILAFPIYSFILPLY). Asn1524 carries N-linked (GlcNAc...) asparagine glycosylation. Residues 1649 to 1691 (TGVHDMRSQSPYQDYPGQHPSVSNLRGQANLSPATGGGHSRSG) are disordered. Positions 1668-1681 (PSVSNLRGQANLSP) are enriched in polar residues. The region spanning 1722 to 1778 (GPNDMAIVESIRSVLCEVDLDTVTKKQVRALVEQRLQTELVGERRTFMDRQIDHELE) is the DEK-C domain.

The protein belongs to the chitin synthase family. Class VII subfamily.

It localises to the cell membrane. The catalysed reaction is [(1-&gt;4)-N-acetyl-beta-D-glucosaminyl](n) + UDP-N-acetyl-alpha-D-glucosamine = [(1-&gt;4)-N-acetyl-beta-D-glucosaminyl](n+1) + UDP + H(+). Its function is as follows. Polymerizes chitin, a structural polymer of the cell wall and septum, by transferring the sugar moiety of UDP-GlcNAc to the non-reducing end of the growing chitin polymer. ChsV and chsVb do perform additive, but not redundant, functions in septum formation. Functions not only in the maintenance of cell wall integrity under different osmotic conditions but also in polarized cell wall synthesis. Plays an important role in the complex infection process of this fungus. The protein is Chitin synthase Vb of Fusarium oxysporum f. sp. lycopersici (strain 4287 / CBS 123668 / FGSC 9935 / NRRL 34936) (Fusarium vascular wilt of tomato).